A 691-amino-acid chain; its full sequence is Elongation factor G (691 aa).

The 276-residue stretch at 8 to 283 (EDYRNFGIMA…AVVDYLPSPA (276 aa)) folds into the tr-type G domain. GTP-binding positions include 17–24 (AHIDAGKT), 81–85 (DTPGH), and 135–138 (NKMD).

Belongs to the TRAFAC class translation factor GTPase superfamily. Classic translation factor GTPase family. EF-G/EF-2 subfamily.

The protein resides in the cytoplasm. Functionally, catalyzes the GTP-dependent ribosomal translocation step during translation elongation. During this step, the ribosome changes from the pre-translocational (PRE) to the post-translocational (POST) state as the newly formed A-site-bound peptidyl-tRNA and P-site-bound deacylated tRNA move to the P and E sites, respectively. Catalyzes the coordinated movement of the two tRNA molecules, the mRNA and conformational changes in the ribosome. This Methylobacterium radiotolerans (strain ATCC 27329 / DSM 1819 / JCM 2831 / NBRC 15690 / NCIMB 10815 / 0-1) protein is Elongation factor G.